A 111-amino-acid chain; its full sequence is Nucleoid-associated protein PputGB1_3833 (111 aa).

Disordered regions lie at residues 1–25 and 87–111; these read MMKG…KMQE and EQSS…KMPF.

Belongs to the YbaB/EbfC family. As to quaternary structure, homodimer.

The protein resides in the cytoplasm. It is found in the nucleoid. In terms of biological role, binds to DNA and alters its conformation. May be involved in regulation of gene expression, nucleoid organization and DNA protection. In Pseudomonas putida (strain GB-1), this protein is Nucleoid-associated protein PputGB1_3833.